Here is an 867-residue protein sequence, read N- to C-terminus: MKEMVGGCCVCADENGWTDNPLIYCDGENCEVAVHQGCYGIQEVPEGEWFCAKCTKASAMMPGSINEATFCCQLCPFDYGALKKTDRNGWAHVICALYIPEVRFGNVHSMEPVILNDVPTDKFNKLCYICNEERPNDAKKGACMSCNKSTCKRSFHVTCAQRKGLLCEEGAISRNVKYCGYCENHLKKAINDPAIKVIPACPPVQRLSKEQDKKKTVLLTSLPLPPPAPRLHMLADPLPIKSNKVNNVLGLGSAINAVSLEERPASGSTVNSGIFVPPPTAFSPPLTTSSRSSVAQDPSPPLTINKNSLSSSGPLIPSTAHLSATTASATPIMANGSTLPPSSETTVGTHCLQQLQIQSAAAAAITQNQIGPSELNGYPAASQLSSFMHEIPARNTTSVASLLPPGAAEYHLNGSGDEEKTVKAVLTAPLTKAKRIRDSKNDMMDKTHKRPRANARPPAVLGSMSSGSSGGTVGKSPSMQRLQNLVAPIVSETVTDFQRDRVADRTAAERRAAAAQSQPSTSTNGGPNVTIPAVVEVHTNSTNSTNHQNNGLTQNAPASTSMQAGTSSNDGVISQNGTSSTSQSNRLNLPSFMEQLLERQWDQGSSLLMANAHFDVAQLLSCLFQLKSENFRLEENLSGLRKRRDHLFALNSRLAEVNTLDVSKRQRSDGLLLQQQIAHHLDPTSIVPKAEVHKQEPLSAPTSVPLPANHSSSLFEDIKAPKATYSRKTPSNIPLTVPLSTAATALTTTTAASSGAPVNSNIQNHRATPSTAGAPMAATPIMTAVTSANELAALSPERAQALLNMYRMPLDANVAAQLSMITNFPGQVNPSLFSRLLAVNMMNGGLQPNGQPLSALPPPTSATPNGK.

A PHD-type 1 zinc finger spans residues 5 to 57; the sequence is VGGCCVCADENGWTDNPLIYCDGENCEVAVHQGCYGIQEVPEGEWFCAKCTKA. The C2HC pre-PHD-type 2 zinc-finger motif lies at 69–102; sequence TFCCQLCPFDYGALKKTDRNGWAHVICALYIPEV. Residues 69-186 are extended PHD2 domain (ePHD2); sequence TFCCQLCPFD…KYCGYCENHL (118 aa). The PHD-type 2 zinc finger occupies 125 to 186; the sequence is KLCYICNEER…KYCGYCENHL (62 aa). Disordered stretches follow at residues 267–311, 440–477, 503–586, and 753–773; these read GSTV…SLSS, KNDMMDKTHKRPRANARPPAVLGSMSSGSSGGTVGKSP, ADRT…QSNR, and SSGAPVNSNIQNHRATPSTAG. Over residues 285 to 311 the composition is skewed to polar residues; it reads PLTTSSRSSVAQDPSPPLTINKNSLSS. Over residues 503–512 the composition is skewed to basic and acidic residues; that stretch reads ADRTAAERRA. Positions 516 to 527 are enriched in polar residues; the sequence is QSQPSTSTNGGP. Residues 538–550 are compositionally biased toward low complexity; sequence HTNSTNSTNHQNN. Residues 551–573 are compositionally biased toward polar residues; the sequence is GLTQNAPASTSMQAGTSSNDGVI. Residues 574–585 are compositionally biased toward low complexity; that stretch reads SQNGTSSTSQSN. Polar residues predominate over residues 758 to 771; it reads VNSNIQNHRATPST.

In terms of assembly, multimer; in vitro. Interacts (via C-terminus) with dot-1.1 to form a heterodimer known as the zfp-1-dot-1.1 complex or DotCom complex. As to expression, isoform a: Expressed at high levels in maturing oocytes, but at low levels in the rest of the germ line (at protein level). Isoform a: Not expressed in the pharynx, germ line and tail. Isoform c: Not expressed in the germ line (at protein level). Isoform c: Uniformly expressed.

The protein localises to the nucleus. It is found in the chromosome. Functionally, recruits the histone methyltransferase dot-1.1 to chromatin to methylate 'Lys-79' of histone H3 and activate transcription. Recognizes and binds histone H3 methylated at 'Lys-4' (H3K4me) at the promoters of target genes. During stress, the zfp-1-dot-1.1 complex also plays a role in the deubiquitination of histone H2B sites, which negatively modulates the RNA polymerase II-induced transcription of highly expressed genes. In response to stress, binds to the pdk-1 promoter to negatively regulate pdk-1 expression, which negatively modulates daf-16/FOXO-mediated gene expression. Thus, most likely via this mechanism, in response to stress, it confers a protective role against neuronal necrosis. Plays a role in Insulin/IGF-1-like signaling (IIS)- and diet restriction-mediated lifespan extension by controlling daf-16/FOXO and pha-4/FOXA recruitment to target promoters. May negatively regulate the expression of genes required for vulval development. May play a role in axon guidance in D-type motor neurons. May suppress sensitivity to RNAi. Required for migration of HSN motor neurons during embryogenesis. In Caenorhabditis elegans, this protein is Zinc finger protein zfp-1.